Reading from the N-terminus, the 99-residue chain is N(2)-fixation sustaining protein CowN (99 aa).

This sequence belongs to the CowN family.

Its function is as follows. Is required to sustain N(2)-dependent growth in the presence of low levels of carbon monoxide (CO). Probably acts by protecting the N(2) fixation ability of the nitrogenase complex, which is inactivated in the presence of CO. This is N(2)-fixation sustaining protein CowN from Magnetococcus marinus (strain ATCC BAA-1437 / JCM 17883 / MC-1).